The primary structure comprises 335 residues: Holliday junction branch migration complex subunit RuvB (335 aa).

Residues 1–181 (MTRILDNDLI…FGITGHMEYY (181 aa)) form a large ATPase domain (RuvB-L) region. ATP is bound by residues L20, R21, G62, K65, T66, T67, 128–130 (EDF), R171, Y181, and R218. T66 lines the Mg(2+) pocket. A small ATPAse domain (RuvB-S) region spans residues 182 to 252 (QTADLTEIVE…ITDKALTMLD (71 aa)). The head domain (RuvB-H) stretch occupies residues 255–335 (QEGLDYVDQK…GYPYEKTIKT (81 aa)). 4 residues coordinate DNA: R291, R310, R312, and R315.

Belongs to the RuvB family. In terms of assembly, homohexamer. Forms an RuvA(8)-RuvB(12)-Holliday junction (HJ) complex. HJ DNA is sandwiched between 2 RuvA tetramers; dsDNA enters through RuvA and exits via RuvB. An RuvB hexamer assembles on each DNA strand where it exits the tetramer. Each RuvB hexamer is contacted by two RuvA subunits (via domain III) on 2 adjacent RuvB subunits; this complex drives branch migration. In the full resolvosome a probable DNA-RuvA(4)-RuvB(12)-RuvC(2) complex forms which resolves the HJ.

The protein localises to the cytoplasm. It carries out the reaction ATP + H2O = ADP + phosphate + H(+). The RuvA-RuvB-RuvC complex processes Holliday junction (HJ) DNA during genetic recombination and DNA repair, while the RuvA-RuvB complex plays an important role in the rescue of blocked DNA replication forks via replication fork reversal (RFR). RuvA specifically binds to HJ cruciform DNA, conferring on it an open structure. The RuvB hexamer acts as an ATP-dependent pump, pulling dsDNA into and through the RuvAB complex. RuvB forms 2 homohexamers on either side of HJ DNA bound by 1 or 2 RuvA tetramers; 4 subunits per hexamer contact DNA at a time. Coordinated motions by a converter formed by DNA-disengaged RuvB subunits stimulates ATP hydrolysis and nucleotide exchange. Immobilization of the converter enables RuvB to convert the ATP-contained energy into a lever motion, pulling 2 nucleotides of DNA out of the RuvA tetramer per ATP hydrolyzed, thus driving DNA branch migration. The RuvB motors rotate together with the DNA substrate, which together with the progressing nucleotide cycle form the mechanistic basis for DNA recombination by continuous HJ branch migration. Branch migration allows RuvC to scan DNA until it finds its consensus sequence, where it cleaves and resolves cruciform DNA. The protein is Holliday junction branch migration complex subunit RuvB of Streptococcus equi subsp. equi (strain 4047).